Consider the following 473-residue polypeptide: MKRASSGGSRLLAWVLWLQAWRVATPCPGACVCYNEPKVTTSCPQQGLQAVPTGIPASSQRIFLHGNRISHVPAASFQSCRNLTILWLHSNALARIDAAAFTGLTLLEQLDLSDNAQLHVVDPTTFHGLGHLHTLHLDRCGLRELGPGLFRGLAALQYLYLQDNNLQALPDNTFRDLGNLTHLFLHGNRIPSVPEHAFRGLHSLDRLLLHQNHVARVHPHAFRDLGRLMTLYLFANNLSMLPAEVLMPLRSLQYLRLNDNPWVCDCRARPLWAWLQKFRGSSSEVPCNLPQRLADRDLKRLAASDLEGCAVASGPFRPIQTSQLTDEELLSLPKCCQPDAADKASVLEPGRPASAGNALKGRVPPGDTPPGNGSGPRHINDSPFGTLPSSAEPPLTALRPGGSEPPGLPTTGPRRRPGCSRKNRTRSHCRLGQAGSGASGTGDAEGSGALPALACSLAPLGLALVLWTVLGPC.

An N-terminal signal peptide occupies residues 1–26 (MKRASSGGSRLLAWVLWLQAWRVATP). Intrachain disulfides connect cysteine 27–cysteine 33 and cysteine 31–cysteine 43. The LRRNT domain occupies 27 to 57 (CPGACVCYNEPKVTTSCPQQGLQAVPTGIPA). 8 LRR repeats span residues 58 to 79 (SSQR…SFQS), 82 to 103 (NLTI…AFTG), 106 to 128 (LLEQ…TFHG), 131 to 152 (HLHT…LFRG), 155 to 176 (ALQY…TFRD), 179 to 200 (NLTH…AFRG), 203 to 224 (SLDR…AFRD), and 227 to 248 (RLMT…VLMP). Asparagine 82 is a glycosylation site (N-linked (GlcNAc...) asparagine). An N-linked (GlcNAc...) asparagine glycan is attached at asparagine 179. Residues 260–311 (NPWVCDCRARPLWAWLQKFRGSSSEVPCNLPQRLADRDLKRLAASDLEGCAV) enclose the LRRCT domain. Disulfide bonds link cysteine 264–cysteine 287, cysteine 266–cysteine 335, and cysteine 309–cysteine 336. The segment at 346-446 (VLEPGRPASA…GASGTGDAEG (101 aa)) is disordered. N-linked (GlcNAc...) asparagine glycosylation occurs at asparagine 372. Residues 413–429 (PRRRPGCSRKNRTRSHC) show a composition bias toward basic residues. Residues 434-445 (AGSGASGTGDAE) show a composition bias toward gly residues. Serine 447 is lipidated: GPI-anchor amidated serine. Residues 448-473 (GALPALACSLAPLGLALVLWTVLGPC) constitute a propeptide, removed in mature form.

Belongs to the Nogo receptor family. In terms of assembly, homodimer. Interacts with MAG. Interacts with RTN4. Interacts with NGFR. Interacts with LINGO1. Interacts with KIAA0319L. Interacts with OLFM1; this inhibits interaction with LINGO1 and NGFR. Interacts with OMG. N-glycosylated. O-glycosylated. Contains terminal sialic acid groups on its glycan chains. Detected in embryonic hippocampus neurons. Detected in brain (at protein level). Detected in neurons in the neocortex, in hippocampus, dorsal thalamus, cerebellum granule cell layer and the mitral cell layer in the olfactory bulb. Detected in brain, dorsal root ganglion and heart.

Its subcellular location is the cell membrane. The protein resides in the membrane raft. The protein localises to the cell projection. It is found in the dendrite. It localises to the axon. Its subcellular location is the perikaryon. Its function is as follows. Receptor for RTN4, OMG and MAG. Functions as a receptor for the sialylated gangliosides GT1b and GM1. Besides, functions as a receptor for chondroitin sulfate proteoglycans. Can also bind heparin. Intracellular signaling cascades are triggered via the coreceptor NGFR. Signaling mediates activation of Rho and downstream reorganization of the actin cytoskeleton. Mediates axonal growth inhibition. Mediates axonal growth inhibition and plays a role in regulating axon regeneration and neuronal plasticity in the adult central nervous system. Plays a role in postnatal brain development. Required for normal axon migration across the brain midline and normal formation of the corpus callosum. Protects motoneurons against apoptosis; protection against apoptosis is probably mediated via interaction with MAG. Acts in conjunction with RTN4 and LINGO1 in regulating neuronal precursor cell motility during cortical development. Like other family members, plays a role in restricting the number dendritic spines and the number of synapses that are formed during brain development. The sequence is that of Reticulon-4 receptor (Rtn4r) from Mus musculus (Mouse).